Here is a 327-residue protein sequence, read N- to C-terminus: Cobalamin biosynthesis protein CobD (327 aa).

4 helical membrane-spanning segments follow: residues 61–78 (MWLT…GLVI), 80–102 (SILP…ILLA), 160–182 (GIVA…YKFI), and 300–322 (AALV…ASLV).

The protein belongs to the CobD/CbiB family.

The protein localises to the cell membrane. Its pathway is cofactor biosynthesis; adenosylcobalamin biosynthesis. In terms of biological role, converts cobyric acid to cobinamide by the addition of aminopropanol on the F carboxylic group. This chain is Cobalamin biosynthesis protein CobD, found in Brucella melitensis biotype 1 (strain ATCC 23456 / CCUG 17765 / NCTC 10094 / 16M).